The following is a 561-amino-acid chain: MGKDLRIKSKAFDGTMRAPNRAMLRAVGLTDEDFKKPMIGVASTWAEVTPCNIHLNDLALLAKKGVRHSDAVPLVFNTITVSDGISMGTQGMNYSLPSRDLIADSIETVVGAENLDGLVAIGACDKNIPGCLIAIANAGVPSVFVYGGTIAPGNVDGKDIDIVSVFEGVGQHNAGAIDDNQLRKVECNACPGAGACGGMYTANTMASAAEALGISLPGSSSNPAESEEKQGDVEAAGEAIKDLLEKGIYPKDILTKKAFENAITVVMALGGSTNAILHLLAVSHAAEVDLTIDDFNRIQKKVPHLADLKPSGRFVMQDLHRVGGVQAVMKLLHENGYLHGDCLTVTGKTIAENLAEAPALKENQQVIMPFDNPKREDGPLIVLKGNLSPTGAVAKVSGVKVKRHTGPARVFNTEKEATQAILDNKIKEGDVLVIRYVGPKGGPGMPEMLSVSSILVGKGMGESVALLTDGRFSGGTHGLVVGHISPEAQDGGPIAFLQEGDMVTIDSNKREISMDVSEDEIKLRQGKWEAPELHKKGVLGKYAHNVTCSSKGAVTDYLNRE.

Cys51 serves as a coordination point for [2Fe-2S] cluster. Asp83 is a binding site for Mg(2+). Cys124 is a [2Fe-2S] cluster binding site. 2 residues coordinate Mg(2+): Asp125 and Lys126. N6-carboxylysine is present on Lys126. Cys196 is a binding site for [2Fe-2S] cluster. Residue Glu447 coordinates Mg(2+). The active-site Proton acceptor is the Ser473.

The protein belongs to the IlvD/Edd family. As to quaternary structure, homodimer. Requires [2Fe-2S] cluster as cofactor. Mg(2+) serves as cofactor.

It carries out the reaction (2R)-2,3-dihydroxy-3-methylbutanoate = 3-methyl-2-oxobutanoate + H2O. The enzyme catalyses (2R,3R)-2,3-dihydroxy-3-methylpentanoate = (S)-3-methyl-2-oxopentanoate + H2O. Its pathway is amino-acid biosynthesis; L-isoleucine biosynthesis; L-isoleucine from 2-oxobutanoate: step 3/4. It functions in the pathway amino-acid biosynthesis; L-valine biosynthesis; L-valine from pyruvate: step 3/4. Functionally, functions in the biosynthesis of branched-chain amino acids. Catalyzes the dehydration of (2R,3R)-2,3-dihydroxy-3-methylpentanoate (2,3-dihydroxy-3-methylvalerate) into 2-oxo-3-methylpentanoate (2-oxo-3-methylvalerate) and of (2R)-2,3-dihydroxy-3-methylbutanoate (2,3-dihydroxyisovalerate) into 2-oxo-3-methylbutanoate (2-oxoisovalerate), the penultimate precursor to L-isoleucine and L-valine, respectively. In Oceanobacillus iheyensis (strain DSM 14371 / CIP 107618 / JCM 11309 / KCTC 3954 / HTE831), this protein is Dihydroxy-acid dehydratase.